Consider the following 424-residue polypeptide: O-methyltransferase bfoD (424 aa).

Asp275 is an S-adenosyl-L-methionine binding site. Residue His326 is the Proton acceptor of the active site.

It belongs to the class I-like SAM-binding methyltransferase superfamily. Cation-independent O-methyltransferase family.

Its pathway is secondary metabolite biosynthesis. In terms of biological role, cytochrome P450 monooxygenase; part of the gene cluster that mediates the biosynthesis of bifonsecin B, a dimeric gamma-naphthopyrone. The first step in the biosynthesis of bifonsecin B is the production of gamma-naphthopyrone precursor YWA1 by the non-reducing polyketide synthase albA, via condensation of one acetyl-CoA starter unit with 6 malonyl-CoA units. YWA1 is then methylated by bfoE at position C-6 to yield foncesin which is further methylated at position C-8 by bfoD to produce fonsecin B. A key enzyme in the biosynthetic pathway is the cytochrome P450 monooxygenase bfoB which catalyzes the oxidative dimerization of fonsecin B to bifonsecin B. Bfob also catalyzes the oxidative dimerization of rubrofusarin B into nigerone. The stereoselectivity of bfoB is influenced by the two natural monomeric substrates; homodimerization of fonsecin B yields a stereochemically pure biaryl, M-foncerine B, while rubrofusarin B yields a mixture of enantiomers M- and P-nigerone. The polypeptide is O-methyltransferase bfoD (Aspergillus brasiliensis (strain CBS 101740 / IMI 381727 / IBT 21946)).